Consider the following 157-residue polypeptide: Crossover junction endodeoxyribonuclease RuvC (157 aa).

Residues aspartate 7, glutamate 66, and aspartate 139 contribute to the active site. Mg(2+)-binding residues include aspartate 7, glutamate 66, and aspartate 139.

It belongs to the RuvC family. Homodimer which binds Holliday junction (HJ) DNA. The HJ becomes 2-fold symmetrical on binding to RuvC with unstacked arms; it has a different conformation from HJ DNA in complex with RuvA. In the full resolvosome a probable DNA-RuvA(4)-RuvB(12)-RuvC(2) complex forms which resolves the HJ. Mg(2+) serves as cofactor.

It is found in the cytoplasm. The enzyme catalyses Endonucleolytic cleavage at a junction such as a reciprocal single-stranded crossover between two homologous DNA duplexes (Holliday junction).. Its function is as follows. The RuvA-RuvB-RuvC complex processes Holliday junction (HJ) DNA during genetic recombination and DNA repair. Endonuclease that resolves HJ intermediates. Cleaves cruciform DNA by making single-stranded nicks across the HJ at symmetrical positions within the homologous arms, yielding a 5'-phosphate and a 3'-hydroxyl group; requires a central core of homology in the junction. The consensus cleavage sequence is 5'-(A/T)TT(C/G)-3'. Cleavage occurs on the 3'-side of the TT dinucleotide at the point of strand exchange. HJ branch migration catalyzed by RuvA-RuvB allows RuvC to scan DNA until it finds its consensus sequence, where it cleaves and resolves the cruciform DNA. The sequence is that of Crossover junction endodeoxyribonuclease RuvC from Campylobacter curvus (strain 525.92).